The following is a 363-amino-acid chain: Thioredoxin domain-containing protein C13F5.05, mitochondrial (363 aa).

The transit peptide at 1 to 24 (MLFRIPTLFTLFLACFSLVSGVFG) directs the protein to the mitochondrion. One can recognise a Thioredoxin domain in the interval 32–141 (NTIELNSKNF…KSLQKFVSDS (110 aa)).

The protein resides in the mitochondrion. This Schizosaccharomyces pombe (strain 972 / ATCC 24843) (Fission yeast) protein is Thioredoxin domain-containing protein C13F5.05, mitochondrial.